Consider the following 93-residue polypeptide: Pyrimidine/purine nucleoside phosphorylase (93 aa).

It belongs to the nucleoside phosphorylase PpnP family.

The catalysed reaction is a purine D-ribonucleoside + phosphate = a purine nucleobase + alpha-D-ribose 1-phosphate. It catalyses the reaction adenosine + phosphate = alpha-D-ribose 1-phosphate + adenine. It carries out the reaction cytidine + phosphate = cytosine + alpha-D-ribose 1-phosphate. The enzyme catalyses guanosine + phosphate = alpha-D-ribose 1-phosphate + guanine. The catalysed reaction is inosine + phosphate = alpha-D-ribose 1-phosphate + hypoxanthine. It catalyses the reaction thymidine + phosphate = 2-deoxy-alpha-D-ribose 1-phosphate + thymine. It carries out the reaction uridine + phosphate = alpha-D-ribose 1-phosphate + uracil. The enzyme catalyses xanthosine + phosphate = alpha-D-ribose 1-phosphate + xanthine. Functionally, catalyzes the phosphorolysis of diverse nucleosides, yielding D-ribose 1-phosphate and the respective free bases. Can use uridine, adenosine, guanosine, cytidine, thymidine, inosine and xanthosine as substrates. Also catalyzes the reverse reactions. The chain is Pyrimidine/purine nucleoside phosphorylase from Magnetococcus marinus (strain ATCC BAA-1437 / JCM 17883 / MC-1).